The sequence spans 229 residues: ATP synthase subunit a 3 (229 aa).

Helical transmembrane passes span 25 to 45 (ADAVSYTWLIIALLLLLSFLA), 86 to 106 (VATIGIFVLVSNLIGLIPGFF), 111 to 131 (NINTTAACAIVVFLSTHVVGI), 142 to 162 (FCGPILWLTPIMFFIEVIGHL), 181 to 201 (LVLIIFFGLAPFLVPLPMMLM), and 202 to 222 (GVLVSFIQAFVFMLLTMIYIQ).

The protein belongs to the ATPase A chain family. As to quaternary structure, F-type ATPases have 2 components, CF(1) - the catalytic core - and CF(0) - the membrane proton channel. CF(1) has five subunits: alpha(3), beta(3), gamma(1), delta(1), epsilon(1). CF(0) has three main subunits: a(1), b(2) and c(9-12). The alpha and beta chains form an alternating ring which encloses part of the gamma chain. CF(1) is attached to CF(0) by a central stalk formed by the gamma and epsilon chains, while a peripheral stalk is formed by the delta and b chains.

The protein resides in the cell inner membrane. Its function is as follows. Key component of the proton channel; it plays a direct role in the translocation of protons across the membrane. This Pelobacter propionicus (strain DSM 2379 / NBRC 103807 / OttBd1) protein is ATP synthase subunit a 3.